Consider the following 409-residue polypeptide: MAESSTVERYRFRKMIERLENLRGQGTELITIYIPPENRLSDVIAQMREEYSQASNIKSKRTRKNVQSAIEVVMQRLKMVGETPENGLVVLVGTVQDGTKEKMVAELIEPPEPVDRFIYRCDSKFYLEPLKEYLEEKDVYGILVMDRREATIGLVKGKRIEPVKRLTSDVPGKHKAGGQSQRRFDRLIEHAAHEFYQKVGEAAREAFEDVKDLKGIIVGGPGPTKEEFLDGDYLPKDLKEKVLTVVDVGNTDESGLREALNKAEEALKEAELVREKRLVRKFMEEAVNGELAAYGEEVDELLKMGAVEVLLVSEDLEGYKVILRCPECGYENIVTVKEKDEAKKYVEECPECGEAELNVEEIKDIVDYYVELAEQMGSNVEIISTETEEGAQFYNAFRGLGALLRFRPK.

The protein belongs to the eukaryotic release factor 1 family. As to quaternary structure, heterodimer of two subunits, one of which binds GTP.

The protein localises to the cytoplasm. Functionally, directs the termination of nascent peptide synthesis (translation) in response to the termination codons UAA, UAG and UGA. In Methanopyrus kandleri (strain AV19 / DSM 6324 / JCM 9639 / NBRC 100938), this protein is Peptide chain release factor subunit 1.